We begin with the raw amino-acid sequence, 165 residues long: Transcription factor E (165 aa).

One can recognise an HTH TFE/IIEalpha-type domain in the interval 5-87; that stretch reads NDPVVRGYLL…LWQLDLSDIE (83 aa).

The protein belongs to the TFE family. In terms of assembly, monomer. Interaction with RNA polymerase subunits RpoF and RpoE is necessary for Tfe stimulatory transcription activity. Able to interact with Tbp and RNA polymerase in the absence of DNA promoter. Interacts both with the preinitiation and elongation complexes.

Transcription factor that plays a role in the activation of archaeal genes transcribed by RNA polymerase. Facilitates transcription initiation by enhancing TATA-box recognition by TATA-box-binding protein (Tbp), and transcription factor B (Tfb) and RNA polymerase recruitment. Not absolutely required for transcription in vitro, but particularly important in cases where Tbp or Tfb function is not optimal. It dynamically alters the nucleic acid-binding properties of RNA polymerases by stabilizing the initiation complex and destabilizing elongation complexes. Seems to translocate with the RNA polymerase following initiation and acts by binding to the non template strand of the transcription bubble in elongation complexes. In Methanococcoides burtonii (strain DSM 6242 / NBRC 107633 / OCM 468 / ACE-M), this protein is Transcription factor E.